Reading from the N-terminus, the 481-residue chain is Fibrinogen beta chain (481 aa).

The N-terminal stretch at Met1–Ala19 is a signal peptide. The tract at residues Asp22–Asp81 is disordered. Positions Leu31 to Pro47 are enriched in basic and acidic residues. The tract at residues Gly35–Arg37 is beta-chain polymerization, binding distal domain of another fibrin. A coiled-coil region spans residues Gln149 to Cys213. Cystine bridges form between Cys221–Cys306 and Cys231–Cys260. A Fibrinogen C-terminal domain is found at Asn222–Phe478. N-linked (GlcNAc...) asparagine glycosylation is present at Asn384. Cysteines 414 and 427 form a disulfide.

In terms of assembly, heterohexamer; disulfide linked. Contains 2 sets of 3 non-identical chains (alpha, beta and gamma). The 2 heterotrimers are in head to head conformation with the N-termini in a small central domain. Post-translationally, conversion of fibrinogen to fibrin is triggered by thrombin, which cleaves fibrinopeptides A and B from alpha and beta chains, and thus exposes the N-terminal polymerization sites responsible for the formation of the soft clot.

The protein localises to the secreted. In terms of biological role, cleaved by the protease thrombin to yield monomers which, together with fibrinogen alpha (FGA) and fibrinogen gamma (FGG), polymerize to form an insoluble fibrin matrix. Fibrin has a major function in hemostasis as one of the primary components of blood clots. In addition, functions during the early stages of wound repair to stabilize the lesion and guide cell migration during re-epithelialization. Was originally thought to be essential for platelet aggregation, based on in vitro studies using anticoagulated blood. However, subsequent studies have shown that it is not absolutely required for thrombus formation in vivo. Enhances expression of SELP in activated platelets via an ITGB3-dependent pathway. Maternal fibrinogen is essential for successful pregnancy. Fibrin deposition is also associated with infection, where it protects against IFNG-mediated hemorrhage. May also facilitate the immune response via both innate and T-cell mediated pathways. The polypeptide is Fibrinogen beta chain (Fgb) (Mus musculus (Mouse)).